The following is a 233-amino-acid chain: 7-cyano-7-deazaguanine synthase (233 aa).

Residue 7-17 (CSGGLDSVSLA) participates in ATP binding. Positions 185, 193, 196, and 199 each coordinate Zn(2+).

The protein belongs to the QueC family. Zn(2+) serves as cofactor.

It carries out the reaction 7-carboxy-7-deazaguanine + NH4(+) + ATP = 7-cyano-7-deazaguanine + ADP + phosphate + H2O + H(+). The protein operates within purine metabolism; 7-cyano-7-deazaguanine biosynthesis. Functionally, catalyzes the ATP-dependent conversion of 7-carboxy-7-deazaguanine (CDG) to 7-cyano-7-deazaguanine (preQ(0)). In Ruegeria sp. (strain TM1040) (Silicibacter sp.), this protein is 7-cyano-7-deazaguanine synthase.